Reading from the N-terminus, the 394-residue chain is Elongation factor Tu (394 aa).

Residues 10-204 (KPHVNIGTIG…AVDSYIPQPV (195 aa)) enclose the tr-type G domain. The interval 19 to 26 (GHVDHGKT) is G1. Residue 19-26 (GHVDHGKT) participates in GTP binding. T26 is a Mg(2+) binding site. Residues 60-64 (GITIS) form a G2 region. The G3 stretch occupies residues 81–84 (DCPG). GTP is bound by residues 81 to 85 (DCPGH) and 136 to 139 (NKVD). The interval 136–139 (NKVD) is G4. The interval 174 to 176 (SAL) is G5.

Belongs to the TRAFAC class translation factor GTPase superfamily. Classic translation factor GTPase family. EF-Tu/EF-1A subfamily. In terms of assembly, monomer.

It localises to the cytoplasm. It catalyses the reaction GTP + H2O = GDP + phosphate + H(+). Its function is as follows. GTP hydrolase that promotes the GTP-dependent binding of aminoacyl-tRNA to the A-site of ribosomes during protein biosynthesis. This is Elongation factor Tu from Rickettsia massiliae (strain Mtu5).